Reading from the N-terminus, the 195-residue chain is Pyridoxal 5'-phosphate synthase subunit PdxT (195 aa).

Residue Gly-46–Ser-48 participates in L-glutamine binding. Catalysis depends on Cys-78, which acts as the Nucleophile. L-glutamine-binding positions include Arg-107 and Ile-136–Arg-137. Residues His-173 and Glu-175 each act as charge relay system in the active site.

The protein belongs to the glutaminase PdxT/SNO family. In terms of assembly, in the presence of PdxS, forms a dodecamer of heterodimers. Only shows activity in the heterodimer.

It carries out the reaction aldehydo-D-ribose 5-phosphate + D-glyceraldehyde 3-phosphate + L-glutamine = pyridoxal 5'-phosphate + L-glutamate + phosphate + 3 H2O + H(+). The enzyme catalyses L-glutamine + H2O = L-glutamate + NH4(+). The protein operates within cofactor biosynthesis; pyridoxal 5'-phosphate biosynthesis. Catalyzes the hydrolysis of glutamine to glutamate and ammonia as part of the biosynthesis of pyridoxal 5'-phosphate. The resulting ammonia molecule is channeled to the active site of PdxS. The polypeptide is Pyridoxal 5'-phosphate synthase subunit PdxT (Dehalococcoides mccartyi (strain CBDB1)).